We begin with the raw amino-acid sequence, 393 residues long: tRNA(Met) cytidine acetate ligase (393 aa).

Positions 81, 142, and 167 each coordinate ATP.

Belongs to the TmcAL family.

It localises to the cytoplasm. It catalyses the reaction cytidine(34) in elongator tRNA(Met) + acetate + ATP = N(4)-acetylcytidine(34) in elongator tRNA(Met) + AMP + diphosphate. In terms of biological role, catalyzes the formation of N(4)-acetylcytidine (ac(4)C) at the wobble position of elongator tRNA(Met), using acetate and ATP as substrates. First activates an acetate ion to form acetyladenylate (Ac-AMP) and then transfers the acetyl group to tRNA to form ac(4)C34. The polypeptide is tRNA(Met) cytidine acetate ligase (Bacillus cereus (strain ATCC 14579 / DSM 31 / CCUG 7414 / JCM 2152 / NBRC 15305 / NCIMB 9373 / NCTC 2599 / NRRL B-3711)).